Here is a 477-residue protein sequence, read N- to C-terminus: Delayed-rectifier potassium channel regulatory subunit KCNS2 (477 aa).

Residues 1–184 (MTRQSLWDLS…LALDNPGYSV (184 aa)) are Cytoplasmic-facing. A helical transmembrane segment spans residues 185 to 206 (LSRVFSVLSILVVLGSIITMCL). Residues 207 to 225 (NSLPDFQIPDSQGNPGEDP) lie on the Extracellular side of the membrane. The chain crosses the membrane as a helical span at residues 226-248 (RFEIVEHFGIAWFTFELVARFAV). Over 249-259 (APDFLKFFKNA) the chain is Cytoplasmic. A helical transmembrane segment spans residues 260–280 (LNLIDLMSIVPFYITLVVNLV). Over 281-290 (VESSPTLANL) the chain is Extracellular. Residues 291–311 (GRVAQVLRLMRIFRILKLARH) form a helical; Voltage-sensor membrane-spanning segment. The Cytoplasmic portion of the chain corresponds to 312-326 (STGLRSLGATLKYSY). The chain crosses the membrane as a helical span at residues 327-348 (KEVGLLLLYLSVGISIFSVVAY). The Extracellular portion of the chain corresponds to 349–361 (TIEKEENEGLATI). Residues 362–373 (PACWWWATVSMT) constitute an intramembrane region (helical). Residues 374–379 (TVGYGD) carry the Selectivity filter motif. The stretch at 374–381 (TVGYGDVV) is an intramembrane region. At 382–388 (PGTTAGK) the chain is on the extracellular side. A helical transmembrane segment spans residues 389–417 (LTASACILAGILVVVLPITLIFNKFSHFY). The Cytoplasmic segment spans residues 418–477 (RRQKQLESAMRSCDFGDGMKEVPSVNLRDYYAHKVKSLMASLTNMSRSSPSELSLDDSLH).

It belongs to the potassium channel family. S (TC 1.A.1.2) subfamily. Kv9.2/KCNS2 sub-subfamily. As to quaternary structure, heterotetramer with KCNB1 and KCNB2. Does not form homomultimers. In terms of tissue distribution, detected in brain, lung and in pulmonary arteries.

The protein localises to the cell membrane. In terms of biological role, potassium channel regulatory subunit that modulate the delayed rectifier voltage-gated potassium channel activity of KCNB1 and KCNB2 by altering their kinetics, expression levels, and shifting the half-inactivation potential to more polarized values. While it does not form functional channels on its own, it can form functional heterotetrameric channels with KCNB1 and KCNB2. Each regulatory subunit has unique regulatory properties that can lead to extensive inhibition, significant changes in kinetics, and/or substantial shifts in the voltage dependencies of the inactivation process. The polypeptide is Delayed-rectifier potassium channel regulatory subunit KCNS2 (Rattus norvegicus (Rat)).